The primary structure comprises 748 residues: Photosystem I P700 chlorophyll a apoprotein A1 (748 aa).

Transmembrane regions (helical) follow at residues 69–92 (IFSA…FHGA), 155–178 (LYVT…FHYH), 194–218 (LNHH…HVSL), 290–308 (VAHH…GHMY), 345–368 (WHAN…HHMY), 384–410 (LSLF…IYMV), 432–454 (AIIS…LYIH), and 529–547 (FMVH…LILL). [4Fe-4S] cluster is bound by residues Cys-571 and Cys-580. Helical transmembrane passes span 587-608 (HVFL…HFSW) and 662-684 (LSAY…MFLF). His-673 is a binding site for chlorophyll a'. Chlorophyll a contacts are provided by Met-681 and Tyr-689. Trp-690 lines the phylloquinone pocket. The chain crosses the membrane as a helical span at residues 722-742 (AVGVAHYLLGGIATTWAFFLA).

Belongs to the PsaA/PsaB family. In terms of assembly, the PsaA/B heterodimer binds the P700 chlorophyll special pair and subsequent electron acceptors. PSI consists of a core antenna complex that captures photons, and an electron transfer chain that converts photonic excitation into a charge separation. The eukaryotic PSI reaction center is composed of at least 11 subunits. The cofactor is P700 is a chlorophyll a/chlorophyll a' dimer, A0 is one or more chlorophyll a, A1 is one or both phylloquinones and FX is a shared 4Fe-4S iron-sulfur center..

It localises to the plastid. The protein resides in the chloroplast thylakoid membrane. The catalysed reaction is reduced [plastocyanin] + hnu + oxidized [2Fe-2S]-[ferredoxin] = oxidized [plastocyanin] + reduced [2Fe-2S]-[ferredoxin]. In terms of biological role, psaA and PsaB bind P700, the primary electron donor of photosystem I (PSI), as well as the electron acceptors A0, A1 and FX. PSI is a plastocyanin/cytochrome c6-ferredoxin oxidoreductase, converting photonic excitation into a charge separation, which transfers an electron from the donor P700 chlorophyll pair to the spectroscopically characterized acceptors A0, A1, FX, FA and FB in turn. Oxidized P700 is reduced on the lumenal side of the thylakoid membrane by plastocyanin or cytochrome c6. This chain is Photosystem I P700 chlorophyll a apoprotein A1, found in Cyanidioschyzon merolae (strain NIES-3377 / 10D) (Unicellular red alga).